We begin with the raw amino-acid sequence, 144 residues long: Catabolic 3-dehydroquinase 1 (144 aa).

Catalysis depends on Y24, which acts as the Proton acceptor. Residues N75, H81, and D88 each contribute to the substrate site. Catalysis depends on H101, which acts as the Proton donor. Residues 102–103 (IS) and R112 contribute to the substrate site.

Belongs to the type-II 3-dehydroquinase family. As to quaternary structure, homododecamer. Adopts a ring-like structure, composed of an arrangement of two hexameric rings stacked on top of one another.

The catalysed reaction is 3-dehydroquinate = 3-dehydroshikimate + H2O. It participates in aromatic compound metabolism; 3,4-dihydroxybenzoate biosynthesis; 3,4-dihydroxybenzoate from 3-dehydroquinate: step 1/2. Is involved in the catabolism of quinate. Allows the utilization of quinate as carbon source via the beta-ketoadipate pathway. The sequence is that of Catabolic 3-dehydroquinase 1 from Fusarium vanettenii (strain ATCC MYA-4622 / CBS 123669 / FGSC 9596 / NRRL 45880 / 77-13-4) (Fusarium solani subsp. pisi).